The chain runs to 451 residues: Tubulin alpha-1 chain (451 aa).

Residue Gln-11 participates in GTP binding. Lys-40 is modified (N6-acetyllysine). Positions 71, 144, 145, 179, 206, and 228 each coordinate GTP. Glu-71 lines the Mg(2+) pocket. The active site involves Glu-254.

It belongs to the tubulin family. In terms of assembly, dimer of alpha and beta chains. A typical microtubule is a hollow water-filled tube with an outer diameter of 25 nm and an inner diameter of 15 nM. Alpha-beta heterodimers associate head-to-tail to form protofilaments running lengthwise along the microtubule wall with the beta-tubulin subunit facing the microtubule plus end conferring a structural polarity. Microtubules usually have 13 protofilaments but different protofilament numbers can be found in some organisms and specialized cells. It depends on Mg(2+) as a cofactor. Undergoes a tyrosination/detyrosination cycle, the cyclic removal and re-addition of a C-terminal tyrosine residue by the enzymes tubulin tyrosine carboxypeptidase (TTCP) and tubulin tyrosine ligase (TTL), respectively. In terms of processing, acetylation of alpha chains at Lys-40 stabilizes microtubules and affects affinity and processivity of microtubule motors. This modification has a role in multiple cellular functions, ranging from cell motility, cell cycle progression or cell differentiation to intracellular trafficking and signaling.

It localises to the cytoplasm. Its subcellular location is the cytoskeleton. It carries out the reaction GTP + H2O = GDP + phosphate + H(+). Its function is as follows. Tubulin is the major constituent of microtubules, a cylinder consisting of laterally associated linear protofilaments composed of alpha- and beta-tubulin heterodimers. Microtubules grow by the addition of GTP-tubulin dimers to the microtubule end, where a stabilizing cap forms. Below the cap, tubulin dimers are in GDP-bound state, owing to GTPase activity of alpha-tubulin. This chain is Tubulin alpha-1 chain (TUBA1), found in Zea mays (Maize).